A 154-amino-acid chain; its full sequence is Myoglobin (154 aa).

The 147-residue stretch at 2–148 (GLSDGEWQLV…FRNDMAAKYK (147 aa)) folds into the Globin domain. Serine 4 is subject to Phosphoserine. Histidine 65 is a binding site for nitrite. Histidine 65 provides a ligand contact to O2. A Phosphothreonine modification is found at threonine 68. Histidine 94 is a heme b binding site.

The protein belongs to the globin family. In terms of assembly, monomeric.

It localises to the cytoplasm. Its subcellular location is the sarcoplasm. The enzyme catalyses Fe(III)-heme b-[protein] + nitric oxide + H2O = Fe(II)-heme b-[protein] + nitrite + 2 H(+). It catalyses the reaction H2O2 + AH2 = A + 2 H2O. In terms of biological role, monomeric heme protein which primary function is to store oxygen and facilitate its diffusion within muscle tissues. Reversibly binds oxygen through a pentacoordinated heme iron and enables its timely and efficient release as needed during periods of heightened demand. Depending on the oxidative conditions of tissues and cells, and in addition to its ability to bind oxygen, it also has a nitrite reductase activity whereby it regulates the production of bioactive nitric oxide. Under stress conditions, like hypoxia and anoxia, it also protects cells against reactive oxygen species thanks to its pseudoperoxidase activity. The protein is Myoglobin (MB) of Ochotona princeps (Southern American pika).